The primary structure comprises 1141 residues: DNA polymerase 120R (1141 aa).

The protein belongs to the DNA polymerase type-B family.

It catalyses the reaction DNA(n) + a 2'-deoxyribonucleoside 5'-triphosphate = DNA(n+1) + diphosphate. DNA-directed DNA polymerase involved in viral DNA replication. This chain is DNA polymerase 120R, found in Invertebrate iridescent virus 3 (IIV-3).